Reading from the N-terminus, the 213-residue chain is MNNSHADVGLVIAVKRLTAAKTRLAPMFSARTREDVVLAMLVDTITAAIAVPALRSVLVVTPDEDAADAARQLGALVLPDPTPQGHHDPLNNALTAAEVVARRENTNVVALQGDLPALRTVELAEAIGAARAHARSFVTDRHGTGTSALFSFGAPLDPHFGLDSAQRHRRSGAVELTGDWPGLRSDIDTPDDVLALNDLGVGPATARAIARAQ.

Positions 146, 161, and 164 each coordinate phosphoenolpyruvate.

Belongs to the CofC family.

It carries out the reaction phosphoenolpyruvate + GTP + H(+) = enolpyruvoyl-2-diphospho-5'-guanosine + diphosphate. The protein operates within cofactor biosynthesis; coenzyme F420 biosynthesis. Functionally, guanylyltransferase that catalyzes the activation of phosphoenolpyruvate (PEP) as enolpyruvoyl-2-diphospho-5'-guanosine, via the condensation of PEP with GTP. It is involved in the biosynthesis of coenzyme F420, a hydride carrier cofactor. This Mycolicibacterium vanbaalenii (strain DSM 7251 / JCM 13017 / BCRC 16820 / KCTC 9966 / NRRL B-24157 / PYR-1) (Mycobacterium vanbaalenii) protein is Phosphoenolpyruvate guanylyltransferase.